The following is a 245-amino-acid chain: Dehydrogenase/reductase SDR family member 6 (245 aa).

NAD(+) is bound by residues 16 to 18 (QGI), Asp37, and Asp58. Arg144 serves as a coordination point for substrate. The Proton acceptor role is filled by Tyr147. Residues Lys151 and 180–184 (VDTPS) each bind NAD(+). Arg188 and Arg205 together coordinate substrate.

Belongs to the short-chain dehydrogenases/reductases (SDR) family. Homotetramer. In terms of tissue distribution, detected in liver, spleen and macrophages. Widely expressed.

The protein resides in the cytoplasm. The catalysed reaction is cis-4-hydroxy-L-proline + NAD(+) = 4-oxo-L-proline + NADH + H(+). It carries out the reaction (R)-3-hydroxybutanoate + NAD(+) = acetoacetate + NADH + H(+). It functions in the pathway amino-acid metabolism. The protein operates within siderophore biosynthesis. NAD(H)-dependent dehydrogenase/reductase with a preference for cyclic substrates. Catalyzes stereoselective conversion of 4-oxo-L-proline to cis-4-hydroxy-L-proline, likely a detoxification mechanism for ketoprolines. Mediates the formation of 2,5-dihydroxybenzoate (2,5-DHBA), a siderophore that chelates free cytoplasmic iron and associates with LCN2, thereby regulating iron transport and homeostasis while protecting cells against free radical-induced oxidative stress. The iron-siderophore complex is imported into mitochondria, providing an iron source for mitochondrial metabolic processes in particular heme synthesis. May act as a 3-hydroxybutyrate dehydrogenase. Its function is as follows. (Microbial infection) May play a role in susceptibility to bacterial infection by providing an assimilable source of iron that is exploited by pathogenic bacteria. Host iron-siderophore complexes can be used by bacteria to promote their own growth and pathogenicity. This Mus musculus (Mouse) protein is Dehydrogenase/reductase SDR family member 6.